The chain runs to 186 residues: Large ribosomal subunit protein uL10 (186 aa).

This sequence belongs to the universal ribosomal protein uL10 family. In terms of assembly, part of the ribosomal stalk of the 50S ribosomal subunit. The N-terminus interacts with L11 and the large rRNA to form the base of the stalk. The C-terminus forms an elongated spine to which L12 dimers bind in a sequential fashion forming a multimeric L10(L12)X complex.

Forms part of the ribosomal stalk, playing a central role in the interaction of the ribosome with GTP-bound translation factors. The sequence is that of Large ribosomal subunit protein uL10 from Nitrosococcus oceani (strain ATCC 19707 / BCRC 17464 / JCM 30415 / NCIMB 11848 / C-107).